The primary structure comprises 215 residues: UPF0323 lipoprotein HP_0232 (215 aa).

The N-terminal stretch at 1–27 (MKKPYRKISDYAIVGGLSALVMVSIVG) is a signal peptide. The N-palmitoyl cysteine moiety is linked to residue Cys28. Cys28 carries S-diacylglycerol cysteine lipidation. A compositionally biased stretch (polar residues) spans 158–169 (QRTYKSPQAYQR). The segment at 158–215 (QRTYKSPQAYQRSQNSFSKSAPSASSMGGASKGQSGFFGSSRPTSSPAVSSGTRGFNS) is disordered. Over residues 170-208 (SQNSFSKSAPSASSMGGASKGQSGFFGSSRPTSSPAVSS) the composition is skewed to low complexity.

The protein belongs to the UPF0323 family.

The protein localises to the cell membrane. This Helicobacter pylori (strain ATCC 700392 / 26695) (Campylobacter pylori) protein is UPF0323 lipoprotein HP_0232.